The following is a 233-amino-acid chain: Ribonuclease 3 (233 aa).

One can recognise an RNase III domain in the interval 4 to 126; it reads LNKLMERLGH…IVGAIYIDAG (123 aa). Glu-39 is a binding site for Mg(2+). Residue Asp-43 is part of the active site. Mg(2+) is bound by residues Asp-112 and Glu-115. Residue Glu-115 is part of the active site. Positions 153 to 222 constitute a DRBM domain; sequence DAKSLLQEWL…AKRFLELLDD (70 aa).

Belongs to the ribonuclease III family. Homodimer. The cofactor is Mg(2+).

The protein localises to the cytoplasm. It catalyses the reaction Endonucleolytic cleavage to 5'-phosphomonoester.. Digests double-stranded RNA. Involved in the processing of primary rRNA transcript to yield the immediate precursors to the large and small rRNAs (23S and 16S). Processes some mRNAs, and tRNAs when they are encoded in the rRNA operon. Processes pre-crRNA and tracrRNA of type II CRISPR loci if present in the organism. In Coxiella burnetii (strain Dugway 5J108-111), this protein is Ribonuclease 3.